The primary structure comprises 199 residues: Shikimate kinase (199 aa).

Position 34–39 (34–39 (GAGKTA)) interacts with ATP. Position 38 (threonine 38) interacts with Mg(2+). 3 residues coordinate substrate: aspartate 56, arginine 80, and glycine 102. Residue arginine 140 participates in ATP binding. Arginine 159 is a binding site for substrate.

It belongs to the shikimate kinase family. As to quaternary structure, monomer. The cofactor is Mg(2+).

It localises to the cytoplasm. The catalysed reaction is shikimate + ATP = 3-phosphoshikimate + ADP + H(+). It functions in the pathway metabolic intermediate biosynthesis; chorismate biosynthesis; chorismate from D-erythrose 4-phosphate and phosphoenolpyruvate: step 5/7. Its function is as follows. Catalyzes the specific phosphorylation of the 3-hydroxyl group of shikimic acid using ATP as a cosubstrate. In Cereibacter sphaeroides (strain ATCC 17023 / DSM 158 / JCM 6121 / CCUG 31486 / LMG 2827 / NBRC 12203 / NCIMB 8253 / ATH 2.4.1.) (Rhodobacter sphaeroides), this protein is Shikimate kinase.